We begin with the raw amino-acid sequence, 321 residues long: Protein translocase subunit SecF (321 aa).

Transmembrane regions (helical) follow at residues 23-43 (VWLI…FSWT), 158-178 (LQTT…YISI), 189-209 (LLAL…LGII), 217-237 (LFAV…VVVF), 258-280 (FAVS…PLIA), and 290-312 (YWFA…ALVP).

This sequence belongs to the SecD/SecF family. SecF subfamily. Forms a complex with SecD. Part of the essential Sec protein translocation apparatus which comprises SecA, SecYEG and auxiliary proteins SecDF. Other proteins may also be involved.

It localises to the cell inner membrane. Functionally, part of the Sec protein translocase complex. Interacts with the SecYEG preprotein conducting channel. SecDF uses the proton motive force (PMF) to complete protein translocation after the ATP-dependent function of SecA. In terms of biological role, probably participates in protein translocation into and across both the cytoplasmic and thylakoid membranes in cyanobacterial cells. The sequence is that of Protein translocase subunit SecF from Prochlorococcus marinus (strain SARG / CCMP1375 / SS120).